The primary structure comprises 409 residues: Arginine deiminase (409 aa).

Residue C399 is the Amidino-cysteine intermediate of the active site.

The protein belongs to the arginine deiminase family.

It localises to the cytoplasm. It catalyses the reaction L-arginine + H2O = L-citrulline + NH4(+). Its pathway is amino-acid degradation; L-arginine degradation via ADI pathway; carbamoyl phosphate from L-arginine: step 1/2. This is Arginine deiminase (arcA) from Borreliella afzelii (Borrelia afzelii).